Reading from the N-terminus, the 506-residue chain is Probable alpha-L-arabinofuranosidase B (506 aa).

The N-terminal stretch at 1–26 (MLSQPSRERAFVLALGLVVSSSLAAA) is a signal peptide. The segment at 27–343 (APCDIYSSGG…ADIVAANYAV (317 aa)) is catalytic. Disulfide bonds link Cys-29/Cys-39, Cys-89/Cys-94, and Cys-184/Cys-185. Asp-227 contacts substrate. Glu-229 acts as the Nucleophile in catalysis. Position 230 (Asn-230) interacts with substrate. Asn-285 carries an N-linked (GlcNAc...) asparagine glycan. Gly-304 provides a ligand contact to substrate. Residue Asp-305 is the Proton donor of the active site. Residues 344 to 506 (TSLTSGPALT…VSWVISSGFA (163 aa)) form an ABD region. An intrachain disulfide couples Cys-409 to Cys-447. The substrate site is built by His-424, Asn-426, Phe-427, Asp-443, His-471, Leu-476, and Asp-496.

It belongs to the glycosyl hydrolase 54 family.

It is found in the secreted. It carries out the reaction Hydrolysis of terminal non-reducing alpha-L-arabinofuranoside residues in alpha-L-arabinosides.. Its pathway is glycan metabolism; L-arabinan degradation. In terms of biological role, alpha-L-arabinofuranosidase involved in the degradation of arabinoxylan, a major component of plant hemicellulose. Able to hydrolyze 1,5-, 1,3- and 1,2-alpha-linkages not only in L-arabinofuranosyl oligosaccharides, but also in polysaccharides containing terminal non-reducing L-arabinofuranoses in side chains, like L-arabinan, arabinogalactan and arabinoxylan. The sequence is that of Probable alpha-L-arabinofuranosidase B (abfB) from Aspergillus clavatus (strain ATCC 1007 / CBS 513.65 / DSM 816 / NCTC 3887 / NRRL 1 / QM 1276 / 107).